We begin with the raw amino-acid sequence, 232 residues long: Peptidoglycan-recognition protein LB (232 aa).

Residues 1–15 form the signal peptide; it reads MTALGLVLLSMMGYS. One can recognise an N-acetylmuramoyl-L-alanine amidase domain in the interval 53–179; it reads APYVIIHHSY…RQVRDTECPG (127 aa). Histidine 59 is a Zn(2+) binding site. A disulfide bond links cysteine 67 and cysteine 73. 2 residues coordinate Zn(2+): histidine 169 and cysteine 177. N-linked (GlcNAc...) asparagine glycosylation occurs at asparagine 196. A disordered region spans residues 213–232; sequence HPQAAAPQKPHQSPPAAPKV.

Belongs to the N-acetylmuramoyl-L-alanine amidase 2 family. As to quaternary structure, monomer. Zn(2+) is required as a cofactor. As to expression, widely expressed.

It is found in the secreted. The catalysed reaction is Hydrolyzes the link between N-acetylmuramoyl residues and L-amino acid residues in certain cell-wall glycopeptides.. N-acetylmuramyl-L-alanine amidase involved in innate immunity by degrading bacterial peptidoglycans (PGN). Probably plays a scavenger role by digesting biologically active PGN into biologically inactive fragments. Has no direct bacteriolytic activity. The polypeptide is Peptidoglycan-recognition protein LB (PGRP-LB) (Drosophila melanogaster (Fruit fly)).